Reading from the N-terminus, the 202-residue chain is MYEYLHGLITAVYPDHVVVDVNGVGYLVNTANPYRYEVSATAVTIYVYQAVSDTAQTLYGFSDFAEKQLFLKLINVNGIGPKSALAILANPDHQGLMMAIKTNDTGFLTKFPGVGKKTAGQIVLDLQNKLDDLAPATDDNTLFTPEVAPTTTENPQLADALAALTALGYRETAVKKITAQLRQFNGQTTNDYLSEGLRLLTK.

Residues 1–62 form a domain I region; sequence MYEYLHGLIT…DTAQTLYGFS (62 aa). The domain II stretch occupies residues 63-141; that stretch reads DFAEKQLFLK…DLAPATDDNT (79 aa). The segment at 142-151 is flexible linker; that stretch reads LFTPEVAPTT. The domain III stretch occupies residues 152 to 202; sequence TENPQLADALAALTALGYRETAVKKITAQLRQFNGQTTNDYLSEGLRLLTK.

Belongs to the RuvA family. As to quaternary structure, homotetramer. Forms an RuvA(8)-RuvB(12)-Holliday junction (HJ) complex. HJ DNA is sandwiched between 2 RuvA tetramers; dsDNA enters through RuvA and exits via RuvB. An RuvB hexamer assembles on each DNA strand where it exits the tetramer. Each RuvB hexamer is contacted by two RuvA subunits (via domain III) on 2 adjacent RuvB subunits; this complex drives branch migration. In the full resolvosome a probable DNA-RuvA(4)-RuvB(12)-RuvC(2) complex forms which resolves the HJ.

It is found in the cytoplasm. Functionally, the RuvA-RuvB-RuvC complex processes Holliday junction (HJ) DNA during genetic recombination and DNA repair, while the RuvA-RuvB complex plays an important role in the rescue of blocked DNA replication forks via replication fork reversal (RFR). RuvA specifically binds to HJ cruciform DNA, conferring on it an open structure. The RuvB hexamer acts as an ATP-dependent pump, pulling dsDNA into and through the RuvAB complex. HJ branch migration allows RuvC to scan DNA until it finds its consensus sequence, where it cleaves and resolves the cruciform DNA. This chain is Holliday junction branch migration complex subunit RuvA, found in Levilactobacillus brevis (strain ATCC 367 / BCRC 12310 / CIP 105137 / JCM 1170 / LMG 11437 / NCIMB 947 / NCTC 947) (Lactobacillus brevis).